Consider the following 202-residue polypeptide: Large ribosomal subunit protein uL5 (202 aa).

The span at 1–17 (MSAKAATKNATKVAVKA) shows a compositional bias: low complexity. The disordered stretch occupies residues 1-30 (MSAKAATKNATKVAVKAPEATTPVETKKSK).

It belongs to the universal ribosomal protein uL5 family. Component of the large ribosomal subunit.

The protein localises to the nucleus. The protein resides in the cytoplasm. In terms of biological role, component of the ribosome, a large ribonucleoprotein complex responsible for the synthesis of proteins in the cell. The small ribosomal subunit (SSU) binds messenger RNAs (mRNAs) and translates the encoded message by selecting cognate aminoacyl-transfer RNA (tRNA) molecules. The large subunit (LSU) contains the ribosomal catalytic site termed the peptidyl transferase center (PTC), which catalyzes the formation of peptide bonds, thereby polymerizing the amino acids delivered by tRNAs into a polypeptide chain. The nascent polypeptides leave the ribosome through a tunnel in the LSU and interact with protein factors that function in enzymatic processing, targeting, and the membrane insertion of nascent chains at the exit of the ribosomal tunnel. The protein is Large ribosomal subunit protein uL5 (rpl11) of Dictyostelium discoideum (Social amoeba).